The following is a 580-amino-acid chain: 9,13-epoxylabda-14-ene synthase, chloroplastic (580 aa).

The transit peptide at 1-32 (MSITFNLKIAPFSGPGIQRSKETFPATEIQIT) directs the protein to the chloroplast. Mg(2+)-binding residues include D322, D326, N466, T470, and E474. A DDXXD motif motif is present at residues 322 to 326 (DDFFD).

Belongs to the terpene synthase family. Mg(2+) serves as cofactor. Present in both leaves and flowers, with higher levels in leaves.

It localises to the plastid. The protein resides in the chloroplast. It carries out the reaction peregrinol diphosphate = (13R)-9,13-epoxylabd-14-ene + diphosphate. The enzyme catalyses (+)-copalyl diphosphate = miltiradiene + diphosphate. It catalyses the reaction 8-hydroxycopalyl diphosphate = (13R)-manoyl oxide + diphosphate. Its pathway is secondary metabolite biosynthesis; terpenoid biosynthesis. Functionally, involved in the biosynthesis of labdane-type diterpenoid including marrubiin and other labdane-related furanoid diterpenoids with potential applications as anti-diabetics, analgesics or vasorelaxants. Terpene synthase the catalyzes the conversion of peregrinol diphosphate to 9,13(R)-epoxy-labd-14-ene, from (+)-copalyl diphosphate ((+)-CPP) to miltiradiene and from 8-hydroxycopalyl diphosphate (LPP, labda-13-en-8-ol diphosphate) to manoyl oxide. The polypeptide is 9,13-epoxylabda-14-ene synthase, chloroplastic (Marrubium vulgare (White horehound)).